The following is a 135-amino-acid chain: L-ectoine synthase (135 aa).

Belongs to the ectoine synthase family.

The enzyme catalyses (2S)-4-acetamido-2-aminobutanoate = L-ectoine + H2O. Its pathway is amine and polyamine biosynthesis; ectoine biosynthesis; L-ectoine from L-aspartate 4-semialdehyde: step 3/3. Its function is as follows. Catalyzes the circularization of gamma-N-acetyl-alpha,gamma-diaminobutyric acid (ADABA) to ectoine (1,4,5,6-tetrahydro-2-methyl-4-pyrimidine carboxylic acid), which is an excellent osmoprotectant. This is L-ectoine synthase from Saccharopolyspora erythraea (strain ATCC 11635 / DSM 40517 / JCM 4748 / NBRC 13426 / NCIMB 8594 / NRRL 2338).